Reading from the N-terminus, the 400-residue chain is Formate-dependent phosphoribosylglycinamide formyltransferase (400 aa).

N(1)-(5-phospho-beta-D-ribosyl)glycinamide-binding positions include 22 to 23 (EL) and E82. ATP contacts are provided by residues R115, K157, 162-167 (SSGKGQ), 197-200 (EGFV), and E205. In terms of domain architecture, ATP-grasp spans 120–315 (RLAAETLGLP…EFELHARAIL (196 aa)). 2 residues coordinate Mg(2+): E274 and E286. N(1)-(5-phospho-beta-D-ribosyl)glycinamide contacts are provided by residues D293, K362, and 369–370 (RR).

Belongs to the PurK/PurT family. As to quaternary structure, homodimer.

It carries out the reaction N(1)-(5-phospho-beta-D-ribosyl)glycinamide + formate + ATP = N(2)-formyl-N(1)-(5-phospho-beta-D-ribosyl)glycinamide + ADP + phosphate + H(+). It functions in the pathway purine metabolism; IMP biosynthesis via de novo pathway; N(2)-formyl-N(1)-(5-phospho-D-ribosyl)glycinamide from N(1)-(5-phospho-D-ribosyl)glycinamide (formate route): step 1/1. Functionally, involved in the de novo purine biosynthesis. Catalyzes the transfer of formate to 5-phospho-ribosyl-glycinamide (GAR), producing 5-phospho-ribosyl-N-formylglycinamide (FGAR). Formate is provided by PurU via hydrolysis of 10-formyl-tetrahydrofolate. This chain is Formate-dependent phosphoribosylglycinamide formyltransferase, found in Mycolicibacterium vanbaalenii (strain DSM 7251 / JCM 13017 / BCRC 16820 / KCTC 9966 / NRRL B-24157 / PYR-1) (Mycobacterium vanbaalenii).